The sequence spans 320 residues: Cytochrome f (320 aa).

The signal sequence occupies residues 1-35; the sequence is MQTRKTLSWIKEEITRSISVSLMIYIITGAYISNA. Heme-binding residues include Y36, C56, C59, and H60. The chain crosses the membrane as a helical span at residues 286–306; sequence VQGLLFFLASVILAQIFLVLK.

This sequence belongs to the cytochrome f family. In terms of assembly, the 4 large subunits of the cytochrome b6-f complex are cytochrome b6, subunit IV (17 kDa polypeptide, petD), cytochrome f and the Rieske protein, while the 4 small subunits are PetG, PetL, PetM and PetN. The complex functions as a dimer. Heme serves as cofactor.

It localises to the plastid. The protein resides in the chloroplast thylakoid membrane. In terms of biological role, component of the cytochrome b6-f complex, which mediates electron transfer between photosystem II (PSII) and photosystem I (PSI), cyclic electron flow around PSI, and state transitions. This Populus alba (White poplar) protein is Cytochrome f.